The primary structure comprises 439 residues: Mitochondrial distribution and morphology protein 12 (439 aa).

Residues 1–439 form the SMP-LTD domain; sequence MSIDINWDTI…VYPSFWTFLV (439 aa). Disordered stretches follow at residues 65–165 and 229–284; these read PLPD…PGAL and LTLT…HEKS. The segment covering 69–90 has biased composition (acidic residues); the sequence is FYEDDEDYPDEEGDEAENEAED. Basic and acidic residues predominate over residues 109 to 121; that stretch reads PSRDSQSRERGRG. Over residues 229-243 the composition is skewed to polar residues; it reads LTLTPQSHPDPTSRP.

It belongs to the MDM12 family. Component of the ER-mitochondria encounter structure (ERMES) or MDM complex, composed of MMM1, MDM10, mdm12 and MDM34. An MMM1 homodimer associates with one molecule of mdm12 on each side in a pairwise head-to-tail manner, and the SMP-LTD domains of MMM1 and mdm12 generate a continuous hydrophobic tunnel for phospholipid trafficking.

The protein resides in the mitochondrion outer membrane. Its subcellular location is the endoplasmic reticulum membrane. In terms of biological role, component of the ERMES/MDM complex, which serves as a molecular tether to connect the endoplasmic reticulum (ER) and mitochondria. Components of this complex are involved in the control of mitochondrial shape and protein biogenesis, and function in nonvesicular lipid trafficking between the ER and mitochondria. mdm12 is required for the interaction of the ER-resident membrane protein MMM1 and the outer mitochondrial membrane-resident beta-barrel protein MDM10. The mdm12-MMM1 subcomplex functions in the major beta-barrel assembly pathway that is responsible for biogenesis of all mitochondrial outer membrane beta-barrel proteins, and acts in a late step after the SAM complex. The MDM10-mdm12-MMM1 subcomplex further acts in the TOM40-specific pathway after the action of the mdm12-MMM1 complex. Essential for establishing and maintaining the structure of mitochondria and maintenance of mtDNA nucleoids. The sequence is that of Mitochondrial distribution and morphology protein 12 from Pyrenophora tritici-repentis (strain Pt-1C-BFP) (Wheat tan spot fungus).